The chain runs to 113 residues: Large ribosomal subunit protein bL19 (113 aa).

The protein belongs to the bacterial ribosomal protein bL19 family.

Its function is as follows. This protein is located at the 30S-50S ribosomal subunit interface and may play a role in the structure and function of the aminoacyl-tRNA binding site. The polypeptide is Large ribosomal subunit protein bL19 (Mycobacterium leprae (strain Br4923)).